We begin with the raw amino-acid sequence, 306 residues long: ATP synthase gamma chain (306 aa).

This sequence belongs to the ATPase gamma chain family. F-type ATPases have 2 components, CF(1) - the catalytic core - and CF(0) - the membrane proton channel. CF(1) has five subunits: alpha(3), beta(3), gamma(1), delta(1), epsilon(1). CF(0) has three main subunits: a, b and c.

Its subcellular location is the cell membrane. Functionally, produces ATP from ADP in the presence of a proton gradient across the membrane. The gamma chain is believed to be important in regulating ATPase activity and the flow of protons through the CF(0) complex. This is ATP synthase gamma chain from Bifidobacterium adolescentis (strain ATCC 15703 / DSM 20083 / NCTC 11814 / E194a).